We begin with the raw amino-acid sequence, 274 residues long: Urease accessory protein UreD (274 aa).

Belongs to the UreD family. In terms of assembly, ureD, UreF and UreG form a complex that acts as a GTP-hydrolysis-dependent molecular chaperone, activating the urease apoprotein by helping to assemble the nickel containing metallocenter of UreC. The UreE protein probably delivers the nickel.

The protein resides in the cytoplasm. Its function is as follows. Required for maturation of urease via the functional incorporation of the urease nickel metallocenter. In Klebsiella pneumoniae subsp. pneumoniae (strain ATCC 700721 / MGH 78578), this protein is Urease accessory protein UreD.